Reading from the N-terminus, the 501-residue chain is MLQRLEQLQMQTSNILKELHSTSIFTDSTTSQLHNGGENSVMDTEESSAIDKLSASLQQVNISSPSVPTSQSRVTQGQSLGNTQISNPTSKTNNVRAKARNIRNPSQRLRPSTSLARLSNNAPRIPKEASLHENSISSKESPSVTTSKHVATITKPSTSSIARMSSNARIAAIPRAKSSMAVRSPSRLGNGPNVRSPKVGFNAKSDDSPVVKSPGSNDKPSASPRISVRSLGNSSVVRPPTRTSTTRPLSRVNVTNASGSISKNSTSPSKVKVNASTKIVRPVSAAQTVRPGSRIFRENSASNTQRPNVSATSNSTVRVASSLAVRPVSRNAQARTPSRLEQREVNVKNSSAKIVRPGTSLGVRSPSRIQSTLSSRTTTGNVRTKAANIVRPSSSINRRPPSSINQRPPSNLRILAPSRSRATIHERPSSSILHRHAHSLTSSSFSTKTLATTKEIQNSPTLVESSTVVHHDPSYLQNQTSEINDTNHSSHSSPLDLNRMI.

3 stretches are compositionally biased toward polar residues: residues 61 to 95 (NISSPSVPTSQSRVTQGQSLGNTQISNPTSKTNNV), 103 to 122 (RNPSQRLRPSTSLARLSNNA), and 132 to 168 (HENSISSKESPSVTTSKHVATITKPSTSSIARMSSNA). 3 disordered regions span residues 61 to 274 (NISS…VKVN), 328 to 381 (VSRN…TTGN), and 478 to 501 (NQTSEINDTNHSSHSSPLDLNRMI). Positions 234–252 (SSVVRPPTRTSTTRPLSRV) are enriched in low complexity. Polar residues-rich tracts occupy residues 253-274 (NVTNASGSISKNSTSPSKVKVN), 367-381 (SRIQSTLSSRTTTGN), and 478-495 (NQTSEINDTNHSSHSSPL).

It localises to the cytoplasm. The protein resides in the cytoskeleton. Functionally, involved in the cell polarity process and in regulation of microtubule growth. Has a role in meiosis. Involved in microtubule dynamics. Binds to mitochondria and microtubules, attaching the tubular mitochondria to the microtubule lattice at multiple discrete interaction sites. This is Microtubule-associated protein mmb1 from Schizosaccharomyces pombe (strain 972 / ATCC 24843) (Fission yeast).